A 186-amino-acid polypeptide reads, in one-letter code: UPF0397 protein SGO_0469 (186 aa).

Helical transmembrane passes span 14-34 (VVATGIGAALFVVIGMVSIPT), 50-70 (LFGVVFGPIVGFLTGFIGHAL), 77-97 (GNPWWTWVLASGLFGLVVGLL), 119-139 (AQFVANALVWVVIAPLGDILI), and 152-172 (VVATVANGLTVAVAGTLLLIA).

Belongs to the UPF0397 family.

It localises to the cell membrane. The protein is UPF0397 protein SGO_0469 of Streptococcus gordonii (strain Challis / ATCC 35105 / BCRC 15272 / CH1 / DL1 / V288).